The chain runs to 410 residues: Putative ribonuclease E (410 aa).

The S1 motif domain maps to 39–119 (SNIYKGKIVR…GTKGALLTTF (81 aa)). Mg(2+) is bound by residues Asp-303 and Asp-346.

The protein belongs to the RNase E/G family. RNase E subfamily. Component of the RNA degradosome, which is a multiprotein complex involved in RNA processing and mRNA degradation. Within the RNA degradosome, RNase E assembles into a homotetramer formed by a dimer of dimers. It depends on Mg(2+) as a cofactor.

It is found in the cytoplasm. It localises to the cell inner membrane. It catalyses the reaction Endonucleolytic cleavage of single-stranded RNA in A- and U-rich regions.. Its function is as follows. Endoribonuclease that plays a central role in RNA processing and decay. Required for the maturation of 5S and 16S rRNAs and the majority of tRNAs. Also involved in the degradation of most mRNAs. In Buchnera aphidicola subsp. Baizongia pistaciae (strain Bp), this protein is Putative ribonuclease E (rne).